We begin with the raw amino-acid sequence, 821 residues long: Probable phosphoenolpyruvate synthase (821 aa).

Residue His-444 is the Tele-phosphohistidine intermediate of the active site. Substrate-binding residues include Arg-543, Arg-590, Glu-687, Gly-709, Thr-710, Asn-711, and Asp-712. Residue Glu-687 participates in Mg(2+) binding. Residue Asp-712 participates in Mg(2+) binding. Catalysis depends on Cys-759, which acts as the Proton donor.

This sequence belongs to the PEP-utilizing enzyme family. The cofactor is Mg(2+).

It catalyses the reaction pyruvate + ATP + H2O = phosphoenolpyruvate + AMP + phosphate + 2 H(+). It participates in carbohydrate biosynthesis; gluconeogenesis. Its function is as follows. Catalyzes the phosphorylation of pyruvate to phosphoenolpyruvate. This is Probable phosphoenolpyruvate synthase (ppsA) from Pyrococcus horikoshii (strain ATCC 700860 / DSM 12428 / JCM 9974 / NBRC 100139 / OT-3).